The following is a 325-amino-acid chain: NADH-quinone oxidoreductase subunit H (325 aa).

9 consecutive transmembrane segments (helical) span residues 11-31 (ILLS…CGAF), 50-69 (NRVG…KMFF), 81-101 (VIFT…FAIV), 114-134 (IGIL…LFAG), 154-174 (LSYE…AGSF), 186-206 (IWNV…GVAV), 237-257 (FFVG…TLFF), 265-285 (LPPF…FILI), and 304-324 (VCLP…LWQA).

It belongs to the complex I subunit 1 family. NDH-1 is composed of 13 different subunits. Subunits NuoA, H, J, K, L, M, N constitute the membrane sector of the complex.

The protein localises to the cell inner membrane. It carries out the reaction a quinone + NADH + 5 H(+)(in) = a quinol + NAD(+) + 4 H(+)(out). Its function is as follows. NDH-1 shuttles electrons from NADH, via FMN and iron-sulfur (Fe-S) centers, to quinones in the respiratory chain. The immediate electron acceptor for the enzyme in this species is believed to be ubiquinone. Couples the redox reaction to proton translocation (for every two electrons transferred, four hydrogen ions are translocated across the cytoplasmic membrane), and thus conserves the redox energy in a proton gradient. This subunit may bind ubiquinone. The polypeptide is NADH-quinone oxidoreductase subunit H (Citrobacter koseri (strain ATCC BAA-895 / CDC 4225-83 / SGSC4696)).